The following is a 164-amino-acid chain: Phosphopantetheine adenylyltransferase (164 aa).

Substrate is bound at residue serine 11. Residues 11-12 and histidine 19 contribute to the ATP site; that span reads SF. Substrate is bound by residues lysine 43, leucine 75, and arginine 89. Residues 90–92, glutamate 100, and 125–131 contribute to the ATP site; these read GLR and YGYLSSS.

The protein belongs to the bacterial CoaD family. As to quaternary structure, homohexamer. It depends on Mg(2+) as a cofactor.

The protein resides in the cytoplasm. It catalyses the reaction (R)-4'-phosphopantetheine + ATP + H(+) = 3'-dephospho-CoA + diphosphate. It functions in the pathway cofactor biosynthesis; coenzyme A biosynthesis; CoA from (R)-pantothenate: step 4/5. Its function is as follows. Reversibly transfers an adenylyl group from ATP to 4'-phosphopantetheine, yielding dephospho-CoA (dPCoA) and pyrophosphate. In Geobacter sulfurreducens (strain ATCC 51573 / DSM 12127 / PCA), this protein is Phosphopantetheine adenylyltransferase.